Consider the following 222-residue polypeptide: 7-carboxy-7-deazaguanine synthase (222 aa).

Residues 16 to 18 and R31 each bind substrate; that span reads LQG. The Radical SAM core domain maps to 22 to 222; that stretch reads NLGRPAVFVR…IMAWGNARGK (201 aa). [4Fe-4S] cluster is bound by residues C35, C39, and C42. T44 provides a ligand contact to Mg(2+). Residue T77 coordinates substrate. S-adenosyl-L-methionine-binding positions include G79 and 126-128; that span reads SPK.

The protein belongs to the radical SAM superfamily. 7-carboxy-7-deazaguanine synthase family. Homodimer. Requires [4Fe-4S] cluster as cofactor. S-adenosyl-L-methionine serves as cofactor. The cofactor is Mg(2+).

The enzyme catalyses 6-carboxy-5,6,7,8-tetrahydropterin + H(+) = 7-carboxy-7-deazaguanine + NH4(+). The protein operates within purine metabolism; 7-cyano-7-deazaguanine biosynthesis. Functionally, catalyzes the complex heterocyclic radical-mediated conversion of 6-carboxy-5,6,7,8-tetrahydropterin (CPH4) to 7-carboxy-7-deazaguanine (CDG), a step common to the biosynthetic pathways of all 7-deazapurine-containing compounds. The chain is 7-carboxy-7-deazaguanine synthase from Pyrobaculum aerophilum (strain ATCC 51768 / DSM 7523 / JCM 9630 / CIP 104966 / NBRC 100827 / IM2).